The following is a 95-amino-acid chain: FMRFamide-like neuropeptides 16 (95 aa).

The N-terminal stretch at 1–24 (MSLSGFEFSSIIAVLLLLIQLSSA) is a signal peptide. A propeptide spanning residues 25-58 (AVLPVDYASQYGVASADEMTALPEEGSLFAERPA) is cleaved from the precursor. Phenylalanine amide is present on residues F67, F77, and F87. The propeptide occupies 90 to 95 (SAPFEQ).

It belongs to the FARP (FMRFamide related peptide) family.

It is found in the secreted. FMRFamides and FMRFamide-like peptides are neuropeptides. AQTFVRF-amide inhibits the activity of dissected pharyngeal myogenic muscle system. This chain is FMRFamide-like neuropeptides 16 (flp-16), found in Caenorhabditis briggsae.